The following is a 245-amino-acid chain: Tetraspanin-16 (245 aa).

The Cytoplasmic segment spans residues 1–13; it reads MAEIHTPYSSLKK. A helical membrane pass occupies residues 14–34; that stretch reads LLSLLNGFVAVSGIILVGLGI. The Extracellular portion of the chain corresponds to 35–37; the sequence is GGK. Residues 38 to 58 form a helical membrane-spanning segment; sequence CGGASLTNVLGLSSAYLLHVG. A topological domain (cytoplasmic) is located at residue Asn-59. Residues 60–80 form a helical membrane-spanning segment; the sequence is LCLVMGCITVLLGCAGWYGAT. At 81 to 94 the chain is on the extracellular side; it reads KESRGTLLFCILSM. A helical membrane pass occupies residues 95-115; that stretch reads VIVLIMEVTAATVVLLFFPIV. Topologically, residues 116–245 are cytoplasmic; it reads GDVALEHTFV…VAQAGLELLA (130 aa).

This sequence belongs to the tetraspanin (TM4SF) family. Broadly expressed in most human tissues and cell lines including neural and bone marrow derived tissues.

It is found in the membrane. This is Tetraspanin-16 (TSPAN16) from Homo sapiens (Human).